The sequence spans 92 residues: MNRLLQRQLFLENLLVGTNSMFHQISKHSINTCCRSLQRILDHLILLQTIHSPVFRLDRMQLRQMQMLACLWIHQHNHDLQATLGAIKWISP.

It belongs to the rotavirus A NSP6 family. As to quaternary structure, interacts with NSP2 and NSP5.

It is found in the host cytoplasm. The protein localises to the host mitochondrion. The protein is Non-structural protein 6 of Rotavirus A (strain RVA/Human/United States/Wa/1974/G1P1A[8]) (RV-A).